Reading from the N-terminus, the 278-residue chain is Elongation factor Ts (278 aa).

An involved in Mg(2+) ion dislocation from EF-Tu region spans residues 80–83 (TDFV).

This sequence belongs to the EF-Ts family.

It is found in the cytoplasm. Associates with the EF-Tu.GDP complex and induces the exchange of GDP to GTP. It remains bound to the aminoacyl-tRNA.EF-Tu.GTP complex up to the GTP hydrolysis stage on the ribosome. In Renibacterium salmoninarum (strain ATCC 33209 / DSM 20767 / JCM 11484 / NBRC 15589 / NCIMB 2235), this protein is Elongation factor Ts.